A 289-amino-acid chain; its full sequence is F-actin-capping protein subunit beta (289 aa).

Positions 73 to 110 (RSPWSNQFDPPLEGGNQGGSGGDGEGDGGEGGAAGSIM) are disordered. The span at 87-106 (GNQGGSGGDGEGDGGEGGAA) shows a compositional bias: gly residues.

It belongs to the F-actin-capping protein beta subunit family. As to quaternary structure, component of the F-actin capping complex, composed of a heterodimer of an alpha and a beta subunit.

It localises to the cytoplasm. The protein resides in the cytoskeleton. The protein localises to the actin patch. Functionally, F-actin-capping proteins bind in a Ca(2+)-independent manner to the fast growing ends of actin filaments (barbed end) thereby blocking the exchange of subunits at these ends. Unlike other capping proteins (such as gelsolin and severin), these proteins do not sever actin filaments. The polypeptide is F-actin-capping protein subunit beta (fac-2) (Neurospora crassa (strain ATCC 24698 / 74-OR23-1A / CBS 708.71 / DSM 1257 / FGSC 987)).